A 653-amino-acid chain; its full sequence is Eukaryotic translation initiation factor 4E-binding protein Mextli (653 aa).

The 66-residue stretch at 227–292 folds into the KH domain; it reads YCKDEVVIRN…DKINYAKQLM (66 aa). Disordered stretches follow at residues 311-335 and 515-570; these read VGGS…TPTG and EGDD…AGTN. Low complexity-rich tracts occupy residues 314-323 and 525-536; these read SCSSLNSSNS and SNGGSSTSNQNG. Basic and acidic residues predominate over residues 546 to 563; that stretch reads SRKESTPETKGAREKGDL.

Interacts with eukaryotic translation initiation factor eIF4E1. Also interacts with eukaryotic translation initiation factor 3 complex members eif3-S9/eif3b, Int6/eif3e and eIF-3p40/eif3h and with CG3225.

The protein localises to the cytoplasm. It is found in the cytoplasmic ribonucleoprotein granule. In terms of biological role, plays a role in promoting translation. The chain is Eukaryotic translation initiation factor 4E-binding protein Mextli from Drosophila melanogaster (Fruit fly).